The sequence spans 128 residues: Protein ApaG (128 aa).

Residues Met1 to Gly123 form the ApaG domain.

The sequence is that of Protein ApaG from Deinococcus radiodurans (strain ATCC 13939 / DSM 20539 / JCM 16871 / CCUG 27074 / LMG 4051 / NBRC 15346 / NCIMB 9279 / VKM B-1422 / R1).